A 95-amino-acid polypeptide reads, in one-letter code: Large ribosomal subunit protein uL23 (95 aa).

It belongs to the universal ribosomal protein uL23 family. As to quaternary structure, part of the 50S ribosomal subunit. Contacts protein L29, and trigger factor when it is bound to the ribosome.

One of the early assembly proteins it binds 23S rRNA. One of the proteins that surrounds the polypeptide exit tunnel on the outside of the ribosome. Forms the main docking site for trigger factor binding to the ribosome. The sequence is that of Large ribosomal subunit protein uL23 from Desulfotalea psychrophila (strain LSv54 / DSM 12343).